A 345-amino-acid polypeptide reads, in one-letter code: Arginase (345 aa).

The segment covering 1-16 has biased composition (basic and acidic residues); that stretch reads MKETAAAKFERQHMDS. The disordered stretch occupies residues 1 to 34; that stretch reads MKETAAAKFERQHMDSPDLGTDDDDKMSPATSPF. Positions 101, 124, 126, 128, 232, and 234 each coordinate Mn(2+).

Belongs to the arginase family. In terms of assembly, homotrimer. Mn(2+) serves as cofactor.

It catalyses the reaction L-arginine + H2O = urea + L-ornithine. It participates in nitrogen metabolism; urea cycle; L-ornithine and urea from L-arginine: step 1/1. With respect to regulation, the enzyme activity is increased in the range of 20-50% upon the addition of Mn(2+) (1 mM), Co(2+) (1 mM), Ni(2+) (1 and 5 mM) and K(+) (5 mM). In contrast, the addition of Cu(2+), Zn(2+), Ca(2+), Mg(2+), Fe(2+) (both 1 and 5 mM), and Co(2+) (5 mM) strongly suppresses the arginase activity. SDS (1%) and EDTA (1 mM) are the most potent inhibitors. Reducing agents DTT (1 mM), PMSF (1 mM) and beta-mercaptoethanol (1 mM) also significantly inhibit activity by 85%, 64% and 35%, respectively. Surfactants Triton X-100 (1%), Tween-80 (1%) and Tween-20 (1%) are more tolerant, showing a slight decrease of arginase activity in the range of 10-30%. Cold-active L-arginase that catalyzes the hydrolysis of L-arginine to L-ornithine and urea, an essential reaction in the urea cycle for toxic ammonia removal and cell proliferation. Is not able to use D-arginine or L-canavanine as substrates. This chain is Arginase, found in Glaciozyma antarctica (strain PI12) (Antarctic psychrophilic yeast).